We begin with the raw amino-acid sequence, 287 residues long: uncharacterized protein (287 aa).

This is an uncharacterized protein from Mycoplasma genitalium (strain ATCC 33530 / DSM 19775 / NCTC 10195 / G37) (Mycoplasmoides genitalium).